The sequence spans 170 residues: CFA/I fimbrial subunit B (170 aa).

The first 23 residues, 1-23 (MKFKKTIGAMALTTMFVAVSASA), serve as a signal peptide directing secretion.

The protein belongs to the fimbrial CS1 protein family. In terms of assembly, CFA/I fimbriae are rather rigid, thread-like filaments of 0.5-1 micrometer, with an apparent axial hole, and a diameter of 7 nanometers. A single CFA/I fimbria consists of about 100 identical protein subunits.

The protein localises to the fimbrium. Its function is as follows. Fimbriae (also called pili), polar filaments radiating from the surface of the bacterium to a length of 0.5-1.5 micrometers and numbering 100-300 per cell, enable bacteria to colonize the epithelium of specific host organs. The polypeptide is CFA/I fimbrial subunit B (cfaB) (Escherichia coli O78:H11 (strain H10407 / ETEC)).